A 169-amino-acid polypeptide reads, in one-letter code: Actin-related protein 2/3 complex subunit 4 (169 aa).

Belongs to the ARPC4 family. As to quaternary structure, component of the Arp2/3 complex composed of arpB/Arp2, arpC/Arp3, arcA/p41-arc, arcB/p34-arc, arcC/p21-arc, arcD/p20-arc and arcE/p16-arc. Interacts with carmil (via the region between the LRR domain and COOH-terminal proline-rich domain); carmil is required for Arp2/3-dependent actin nucleation. Arp2/3 complex, MyoB, MyoC, and the alpha and beta subunits of capping protein all form a larger complex with carmil.

It is found in the cytoplasm. Its subcellular location is the cytoskeleton. It localises to the cytosol. The protein localises to the cell cortex. The protein resides in the cell projection. It is found in the pseudopodium. In terms of biological role, functions as a component of the Arp2/3 complex which is involved in regulation of actin polymerization and together with an activating nucleation-promoting factor (NPF) mediates the formation of branched actin networks. Seems to contact the pointed end of the daughter actin filament. The Arp2/3 complex is involved in organizing the actin system in cell motility and chemotaxis, in phagocytosis and macropinocytosis, at late steps of endosome processing, and in mitosis. In concert with a group of other proteins, the Arp2/3 complex plays a general role in the rapid activation and adaptation of the actin system to its multiple functions. The polypeptide is Actin-related protein 2/3 complex subunit 4 (arcD) (Dictyostelium discoideum (Social amoeba)).